The chain runs to 219 residues: tRNA (guanine-N(7)-)-methyltransferase (219 aa).

Glu46, Glu71, Asp100, and Asp122 together coordinate S-adenosyl-L-methionine. Asp122 is a catalytic residue. Residue Lys126 participates in substrate binding. Residues 128–133 (KHEKRR) are interaction with RNA. Residues Asp158 and 199-202 (TEYE) contribute to the substrate site.

It belongs to the class I-like SAM-binding methyltransferase superfamily. TrmB family.

It catalyses the reaction guanosine(46) in tRNA + S-adenosyl-L-methionine = N(7)-methylguanosine(46) in tRNA + S-adenosyl-L-homocysteine. It participates in tRNA modification; N(7)-methylguanine-tRNA biosynthesis. Functionally, catalyzes the formation of N(7)-methylguanine at position 46 (m7G46) in tRNA. This is tRNA (guanine-N(7)-)-methyltransferase from Oenococcus oeni (strain ATCC BAA-331 / PSU-1).